A 499-amino-acid polypeptide reads, in one-letter code: Bestrophin homolog 22 (499 aa).

The next 4 helical transmembrane spans lie at 29 to 49, 77 to 97, 235 to 255, and 267 to 287; these read WKAV…ISCI, IPLT…WGSI, LVYP…CLIG, and GIDL…MGWM. The segment covering 417–432 has biased composition (basic and acidic residues); the sequence is HNAKHAKQRGLERANS. Disordered regions lie at residues 417–455 and 474–499; these read HNAK…ANGS and TSNP…TSRH.

It belongs to the anion channel-forming bestrophin (TC 1.A.46) family. Calcium-sensitive chloride channel subfamily. Forms oligomers.

Its subcellular location is the cell membrane. In terms of biological role, forms chloride channels. The chain is Bestrophin homolog 22 (best-22) from Caenorhabditis elegans.